The sequence spans 834 residues: Glycerol-3-phosphate acyltransferase (834 aa).

The HXXXXD motif signature appears at 309-314; the sequence is CHRSHI.

This sequence belongs to the GPAT/DAPAT family.

Its subcellular location is the cell inner membrane. It carries out the reaction sn-glycerol 3-phosphate + an acyl-CoA = a 1-acyl-sn-glycero-3-phosphate + CoA. It functions in the pathway phospholipid metabolism; CDP-diacylglycerol biosynthesis; CDP-diacylglycerol from sn-glycerol 3-phosphate: step 1/3. The protein is Glycerol-3-phosphate acyltransferase of Pseudomonas fluorescens (strain ATCC BAA-477 / NRRL B-23932 / Pf-5).